A 125-amino-acid chain; its full sequence is Glutamyl-tRNA(Gln) amidotransferase subunit C, mitochondrial (125 aa).

The protein belongs to the GatC family. In terms of assembly, subunit of the heterotrimeric GatCAB amidotransferase (AdT) complex, composed of A, B and C subunits.

It is found in the mitochondrion. It carries out the reaction L-glutamyl-tRNA(Gln) + L-glutamine + ATP + H2O = L-glutaminyl-tRNA(Gln) + L-glutamate + ADP + phosphate + H(+). In terms of biological role, allows the formation of correctly charged Gln-tRNA(Gln) through the transamidation of misacylated Glu-tRNA(Gln) in the mitochondria. The reaction takes place in the presence of glutamine and ATP through an activated gamma-phospho-Glu-tRNA(Gln). The protein is Glutamyl-tRNA(Gln) amidotransferase subunit C, mitochondrial of Drosophila mojavensis (Fruit fly).